Consider the following 237-residue polypeptide: Ribosomal RNA small subunit methyltransferase G (237 aa).

S-adenosyl-L-methionine is bound by residues glycine 78, phenylalanine 83, 129 to 130, and arginine 148; that span reads AE. The tract at residues 218–237 is disordered; it reads KKETPNKYPRKAGMPNKRPL.

This sequence belongs to the methyltransferase superfamily. RNA methyltransferase RsmG family.

Its subcellular location is the cytoplasm. Functionally, specifically methylates the N7 position of a guanine in 16S rRNA. The polypeptide is Ribosomal RNA small subunit methyltransferase G (Streptococcus pneumoniae (strain JJA)).